A 160-amino-acid chain; its full sequence is Ribosomal RNA large subunit methyltransferase H (160 aa).

S-adenosyl-L-methionine is bound by residues Gly108 and 127 to 132 (FGLMTW).

It belongs to the RNA methyltransferase RlmH family. In terms of assembly, homodimer.

Its subcellular location is the cytoplasm. The enzyme catalyses pseudouridine(1915) in 23S rRNA + S-adenosyl-L-methionine = N(3)-methylpseudouridine(1915) in 23S rRNA + S-adenosyl-L-homocysteine + H(+). Its function is as follows. Specifically methylates the pseudouridine at position 1915 (m3Psi1915) in 23S rRNA. The protein is Ribosomal RNA large subunit methyltransferase H of Bartonella bacilliformis (strain ATCC 35685 / KC583 / Herrer 020/F12,63).